The sequence spans 770 residues: DEAD-box ATP-dependent RNA helicase 24 (770 aa).

The interval 1-106 (MSKRPKLGGF…ADSDDEDDPV (106 aa)) is disordered. Positions 14–26 (RPTSYSFERSQPP) are enriched in polar residues. A compositionally biased stretch (acidic residues) spans 34-43 (DDPDLDDIAF). Residues 44 to 55 (SDDAAAPSDAPP) show a composition bias toward low complexity. The Q motif signature appears at 219–247 (KSFADCGFPVQLMNAIAKQGYEKPTTIQC). A Helicase ATP-binding domain is found at 250–425 (LPIVLSGRDI…REILTDPIRV (176 aa)). 263–270 (AKTGSGKT) provides a ligand contact to ATP. Positions 373 to 376 (DEAD) match the DEAD box motif. In terms of domain architecture, Helicase C-terminal spans 436–599 (DIKQVVNVLP…DVPNELMDLA (164 aa)). Residues 604–613 (RFRANRDSRK) are compositionally biased toward basic and acidic residues. Disordered regions lie at residues 604 to 640 (RFRA…RGRG), 683 to 704 (VSAS…PSSF), and 729 to 770 (LPAP…GWDR). Over residues 621-635 (GKGGGGGGGGGSGAR) the composition is skewed to gly residues. The segment covering 683-697 (VSASSSNTPSNSAPS) has biased composition (low complexity). The span at 744–753 (TVENANPNPE) shows a compositional bias: polar residues. Basic and acidic residues predominate over residues 754 to 770 (SSRDRTRERKRPSGWDR).

Belongs to the DEAD box helicase family.

The enzyme catalyses ATP + H2O = ADP + phosphate + H(+). This chain is DEAD-box ATP-dependent RNA helicase 24, found in Oryza sativa subsp. japonica (Rice).